The following is a 487-amino-acid chain: Transcription factor GTE5, chloroplastic (487 aa).

The transit peptide at 1 to 32 directs the protein to the chloroplast; that stretch reads MSSEHISGGGASKTKKHKWSSSQNRPKPMGVS. Disordered regions lie at residues 1-48, 93-127, and 400-487; these read MSSE…NSFA, ANPGGSMAKSGVVGRSKKVKTGNGGGKKSGHGADK, and KNEA…DNGN. A Bromo domain is found at 127–233; the sequence is KGTVQIFKNC…NMFEDKWVSI (107 aa). An NET domain is found at 320 to 401; the sequence is EEEAPVNNRD…GYKESLSKKN (82 aa). Basic and acidic residues predominate over residues 400-414; the sequence is KNEAHGFGSERDAES. Polar residues predominate over residues 415-435; sequence VHNSIQEPTTLVSGTTTSRVT. The segment covering 451 to 487 has biased composition (low complexity); sequence NNASGSSSSNSSSSDSGSCSSDTDSDSSSGRGSDNGN.

In terms of assembly, interacts with SIZ1 (via PHD domain). Post-translationally, sumoylated by SIZ1.

Its subcellular location is the plastid. It is found in the chloroplast. The sequence is that of Transcription factor GTE5, chloroplastic (GTE5) from Arabidopsis thaliana (Mouse-ear cress).